The chain runs to 1388 residues: DNA-directed RNA polymerase subunit beta (1388 aa).

This sequence belongs to the RNA polymerase beta chain family. The RNAP catalytic core consists of 2 alpha, 1 beta, 1 beta' and 1 omega subunit. When a sigma factor is associated with the core the holoenzyme is formed, which can initiate transcription.

It carries out the reaction RNA(n) + a ribonucleoside 5'-triphosphate = RNA(n+1) + diphosphate. Functionally, DNA-dependent RNA polymerase catalyzes the transcription of DNA into RNA using the four ribonucleoside triphosphates as substrates. This Xylella fastidiosa (strain 9a5c) protein is DNA-directed RNA polymerase subunit beta.